The chain runs to 1024 residues: Beta-galactosidase (1024 aa).

Residues asparagine 103 and aspartate 202 each coordinate substrate. Aspartate 202 is a binding site for Na(+). The Mg(2+) site is built by glutamate 417, histidine 419, and glutamate 462. Residues glutamate 462 and 538 to 541 (EYAH) contribute to the substrate site. Glutamate 462 serves as the catalytic Proton donor. Glutamate 538 (nucleophile) is an active-site residue. Asparagine 598 contributes to the Mg(2+) binding site. Na(+)-binding residues include phenylalanine 602 and asparagine 605. 2 residues coordinate substrate: asparagine 605 and tryptophan 1000.

This sequence belongs to the glycosyl hydrolase 2 family. Homotetramer. Mg(2+) is required as a cofactor. Requires Na(+) as cofactor.

It carries out the reaction Hydrolysis of terminal non-reducing beta-D-galactose residues in beta-D-galactosides.. The protein is Beta-galactosidase of Escherichia coli O9:H4 (strain HS).